The sequence spans 199 residues: Patulin biosynthesis cluster protein F (199 aa).

The first 21 residues, 1–21 (MKSSLWVSLAVSLIGLGPAAA), serve as a signal peptide directing secretion. 2 N-linked (GlcNAc...) asparagine glycosylation sites follow: asparagine 129 and asparagine 183.

The protein belongs to the patF family.

Its subcellular location is the cytoplasm. It localises to the cytosol. It catalyses the reaction phyllostine = neopatulin. It participates in mycotoxin biosynthesis; patulin biosynthesis. Its function is as follows. Part of the gene cluster that mediates the biosynthesis of patulin, an acetate-derived tetraketide mycotoxin produced by several fungal species that shows antimicrobial properties against several bacteria. PatF catalyzes the conversion of phyllostine into neopatulin. The pathway begins with the synthesis of 6-methylsalicylic acid by the polyketide synthase (PKS) patK via condensation of acetate and malonate units. The 6-methylsalicylic acid decarboxylase patG then catalyzes the decarboxylation of 6-methylsalicylic acid to yield m-cresol (also known as 3-methylphenol). These first reactions occur in the cytosol. The intermediate m-cresol is then transported into the endoplasmic reticulum where the cytochrome P450 monooxygenase patH converts it to m-hydroxybenzyl alcohol, which is further converted to gentisyl alcohol by the cytochrome P450 monooxygenase patI. The oxidoreductases patJ and patO further convert gentisyl alcohol to isoepoxydon in the vacuole. PatN catalyzes then the transformation of isoepoxydon into phyllostine. The cluster protein patF is responsible for the conversion from phyllostine to neopatulin whereas the alcohol dehydrogenase patD converts neopatulin to E-ascladiol. The steps between isoepoxydon and E-ascladiol occur in the cytosol, and E-ascladiol is probably secreted to the extracellular space by one of the cluster-specific transporters patC or patM. Finally, the secreted patulin synthase patE catalyzes the conversion of E-ascladiol to patulin. The protein is Patulin biosynthesis cluster protein F of Penicillium expansum (Blue mold rot fungus).